We begin with the raw amino-acid sequence, 92 residues long: Small ribosomal subunit protein uS19 (92 aa).

Belongs to the universal ribosomal protein uS19 family.

In terms of biological role, protein S19 forms a complex with S13 that binds strongly to the 16S ribosomal RNA. The chain is Small ribosomal subunit protein uS19 from Rhodopseudomonas palustris (strain BisB18).